The primary structure comprises 643 residues: Type VI secretion system spike protein VgrG1a (643 aa).

The protein belongs to the VgrG protein family. Forms homotrimers. Part of the type VI secretion system (T6SS). Interacts with EagT6 and Tse6; these interactions are required for Tse6 loading onto VgrG1. Interacts with Hcp1.

The protein resides in the secreted. In terms of biological role, part of the H1 type VI secretion system (H1-T6SS) specialized secretion system, which delivers several virulence factors in both prokaryotic and eukaryotic cells during infection. Forms the spike at the tip of the elongating tube formed by haemolysin co-regulated protein 1/Hcp1. Allows the delivery of the Tse6 toxin to target cells where it exerts its toxicity. This chain is Type VI secretion system spike protein VgrG1a, found in Pseudomonas aeruginosa (strain ATCC 15692 / DSM 22644 / CIP 104116 / JCM 14847 / LMG 12228 / 1C / PRS 101 / PAO1).